Here is a 336-residue protein sequence, read N- to C-terminus: MELHILFFILAGLLIAVLIGFSLWSARREKSRIFSNTFSTRPPSTPINNVVSDVPPSLNPQSYSQTMGQNSEIEVDNPVQIQQEVESSLREIKINLPGQDSAAYQNRPQETPIYSGQPVQPVQTQYQAQAQYQSQPQHIEPAFTQAPQSPIAEATSVLEQSVEELERQAAQGDVDIYSDASVRVELAKNSMQADSVAEQKPVAENNMLTLYVVAPEGQQFRGDYVVQSLEALGFQYGEYQIFHRHQHMGNSASPVIFSVANMMQPGIFDLTKIEHFSTVGLVLFMHLPSEGNDVVNLKLLLKTTENLAQALGGFVLNEHREIFDENSRQAYLARVS.

Residues 1–2 are Periplasmic-facing; it reads ME. Residues 3–23 traverse the membrane as a helical segment; that stretch reads LHILFFILAGLLIAVLIGFSL. Residues 24 to 336 are Cytoplasmic-facing; it reads WSARREKSRI…SRQAYLARVS (313 aa).

It belongs to the ZipA family. In terms of assembly, interacts with FtsZ via their C-terminal domains.

It localises to the cell inner membrane. Functionally, essential cell division protein that stabilizes the FtsZ protofilaments by cross-linking them and that serves as a cytoplasmic membrane anchor for the Z ring. Also required for the recruitment to the septal ring of downstream cell division proteins. In Actinobacillus pleuropneumoniae serotype 5b (strain L20), this protein is Cell division protein ZipA.